Here is an 85-residue protein sequence, read N- to C-terminus: MSEKTVRTLTGKVVSDKMDKSIVVLIERRVQHPLYGKSIRRSTKLHAHDENNVAKIGDVVTIKESRPISKTKAWTLVEVVEAAAE.

This sequence belongs to the universal ribosomal protein uS17 family. As to quaternary structure, part of the 30S ribosomal subunit.

In terms of biological role, one of the primary rRNA binding proteins, it binds specifically to the 5'-end of 16S ribosomal RNA. This chain is Small ribosomal subunit protein uS17, found in Acinetobacter baumannii (strain AB307-0294).